A 166-amino-acid chain; its full sequence is Ribosome maturation factor RimM (166 aa).

The region spanning 94 to 166 (EGEYYLGKLI…IELKVLDLLK (73 aa)) is the PRC barrel domain.

The protein belongs to the RimM family. As to quaternary structure, binds ribosomal protein uS19.

It is found in the cytoplasm. In terms of biological role, an accessory protein needed during the final step in the assembly of 30S ribosomal subunit, possibly for assembly of the head region. Essential for efficient processing of 16S rRNA. May be needed both before and after RbfA during the maturation of 16S rRNA. It has affinity for free ribosomal 30S subunits but not for 70S ribosomes. This is Ribosome maturation factor RimM from Borreliella burgdorferi (strain ATCC 35210 / DSM 4680 / CIP 102532 / B31) (Borrelia burgdorferi).